A 371-amino-acid polypeptide reads, in one-letter code: Cytochrome b (371 aa).

4 helical membrane-spanning segments follow: residues F25–V45, W69–I90, W105–L125, and F170–M190. H75 and H89 together coordinate heme b. Heme b contacts are provided by H174 and H188. H193 lines the a ubiquinone pocket. Transmembrane regions (helical) follow at residues Y218 to F238, L280 to H300, I312 to T332, and F339 to P358.

It belongs to the cytochrome b family. As to quaternary structure, the cytochrome bc1 complex contains 3 respiratory subunits (MT-CYB, CYC1 and UQCRFS1), 2 core proteins (UQCRC1 and UQCRC2) and probably 6 low-molecular weight proteins. It depends on heme b as a cofactor.

It localises to the mitochondrion inner membrane. Functionally, component of the ubiquinol-cytochrome c reductase complex (complex III or cytochrome b-c1 complex) that is part of the mitochondrial respiratory chain. The b-c1 complex mediates electron transfer from ubiquinol to cytochrome c. Contributes to the generation of a proton gradient across the mitochondrial membrane that is then used for ATP synthesis. In Eryx colubrinus loveridgei, this protein is Cytochrome b (MT-CYB).